Consider the following 99-residue polypeptide: Plastocyanin B'/B'' (99 aa).

Positions 1-99 (IEVLLGSDDG…AGMVGKVTVN (99 aa)) constitute a Plastocyanin-like domain. Cu cation is bound by residues His37, Cys84, His87, and Met92.

This sequence belongs to the plastocyanin family. Requires Cu(2+) as cofactor.

It localises to the plastid. Its subcellular location is the chloroplast thylakoid membrane. In terms of biological role, participates in electron transfer between P700 and the cytochrome b6-f complex in photosystem I. The sequence is that of Plastocyanin B'/B'' from Nicotiana tabacum (Common tobacco).